The sequence spans 675 residues: Potassium-transporting ATPase ATP-binding subunit 2 (675 aa).

Helical transmembrane passes span 34–54 (IMFV…FPDI), 65–85 (LITI…SEAF), 216–236 (IALF…IVTL), and 245–265 (LILP…TTIG). Aspartate 304 acts as the 4-aspartylphosphate intermediate in catalysis. Residues aspartate 341, glutamate 345, 372–379 (FTAETRMS), and lysine 390 contribute to the ATP site. Aspartate 513 and aspartate 517 together coordinate Mg(2+). 3 consecutive transmembrane segments (helical) span residues 569-591 (ALTT…ALMM), 611-631 (AIIS…PIAM), and 644-664 (IFIN…FLGI).

The protein belongs to the cation transport ATPase (P-type) (TC 3.A.3) family. Type IA subfamily. As to quaternary structure, the system is composed of three essential subunits: KdpA, KdpB and KdpC.

It localises to the cell membrane. The enzyme catalyses K(+)(out) + ATP + H2O = K(+)(in) + ADP + phosphate + H(+). Its function is as follows. Part of the high-affinity ATP-driven potassium transport (or Kdp) system, which catalyzes the hydrolysis of ATP coupled with the electrogenic transport of potassium into the cytoplasm. This subunit is responsible for energy coupling to the transport system and for the release of the potassium ions to the cytoplasm. This Staphylococcus aureus (strain MRSA252) protein is Potassium-transporting ATPase ATP-binding subunit 2.